The sequence spans 283 residues: Putative sugar uptake protein BA_0200/GBAA_0200/BAS0200 (283 aa).

10 consecutive transmembrane segments (helical) span residues 4-21, 26-48, 52-71, 84-106, 110-132, 151-173, 178-195, 208-230, 234-253, and 260-279; these read LLAL…LVSV, GAYS…MYVF, ALTM…WALG, VSTT…GVIA, WTTT…GVVF, LLTL…WYNI, AILP…VLTS, ALSG…RVGV, FPLS…VFLG, and QLIF…VLLG.

The protein belongs to the GRP transporter (TC 2.A.7.5) family.

The protein resides in the cell membrane. The chain is Putative sugar uptake protein BA_0200/GBAA_0200/BAS0200 from Bacillus anthracis.